The primary structure comprises 428 residues: Adenylosuccinate synthetase (428 aa).

GTP contacts are provided by residues 12 to 18 and 40 to 42; these read GDEGKGK and GHT. Catalysis depends on Asp13, which acts as the Proton acceptor. Asp13 and Gly40 together coordinate Mg(2+). IMP-binding positions include 13–16, 38–41, Thr129, Arg143, Gln224, Thr239, and Arg303; these read DEGK and NAGH. The active-site Proton donor is His41. A substrate-binding site is contributed by 299 to 305; sequence VTTGRSR. GTP-binding positions include Arg305, 331–333, and 413–415; these read KLD and GVG.

Belongs to the adenylosuccinate synthetase family. In terms of assembly, homodimer. Requires Mg(2+) as cofactor.

The protein localises to the cytoplasm. It catalyses the reaction IMP + L-aspartate + GTP = N(6)-(1,2-dicarboxyethyl)-AMP + GDP + phosphate + 2 H(+). It functions in the pathway purine metabolism; AMP biosynthesis via de novo pathway; AMP from IMP: step 1/2. In terms of biological role, plays an important role in the de novo pathway of purine nucleotide biosynthesis. Catalyzes the first committed step in the biosynthesis of AMP from IMP. The protein is Adenylosuccinate synthetase of Saccharopolyspora erythraea (strain ATCC 11635 / DSM 40517 / JCM 4748 / NBRC 13426 / NCIMB 8594 / NRRL 2338).